The sequence spans 275 residues: Envelope glycoprotein (275 aa).

3 disulfide bridges follow: Cys-1–Cys-10, Cys-18–Cys-27, and Cys-58–Cys-62. A glycan (N-linked (GlcNAc...) asparagine; by host) is linked at Asn-122. 4 disulfide bridges follow: Cys-164–Cys-194, Cys-187–Cys-239, Cys-204–Cys-209, and Cys-240–Cys-245.

This sequence belongs to the hantavirus envelope glycoprotein family. As to quaternary structure, homodimer. Homotetramer; forms heterotetrameric Gn-Gc spikes in the pre-fusion conformation. Homotrimer; forms homotrimer in the post-fusion conformation at acidic pH. Interacts (via C-terminus) with the nucleoprotein. Envelope polyprotein precursor is quickly cleaved in vivo just after synthesis, presumably by host signal peptidase.

The protein localises to the virion membrane. It is found in the host cell surface. The protein resides in the host Golgi apparatus membrane. Its subcellular location is the host endoplasmic reticulum membrane. Forms homotetramers with glycoprotein N at the surface of the virion. Attaches the virion to host cell receptors including integrin ITGAV/ITGB3. This attachment induces virion internalization predominantly through clathrin-dependent endocytosis. Class II fusion protein that promotes fusion of viral membrane with host endosomal membrane after endocytosis of the virion. The polypeptide is Envelope glycoprotein (GP) (Homo sapiens (Human)).